The chain runs to 252 residues: 3-deoxy-manno-octulosonate cytidylyltransferase (252 aa).

It belongs to the KdsB family.

It is found in the cytoplasm. The catalysed reaction is 3-deoxy-alpha-D-manno-oct-2-ulosonate + CTP = CMP-3-deoxy-beta-D-manno-octulosonate + diphosphate. The protein operates within nucleotide-sugar biosynthesis; CMP-3-deoxy-D-manno-octulosonate biosynthesis; CMP-3-deoxy-D-manno-octulosonate from 3-deoxy-D-manno-octulosonate and CTP: step 1/1. It participates in bacterial outer membrane biogenesis; lipopolysaccharide biosynthesis. Functionally, activates KDO (a required 8-carbon sugar) for incorporation into bacterial lipopolysaccharide in Gram-negative bacteria. This chain is 3-deoxy-manno-octulosonate cytidylyltransferase, found in Solibacter usitatus (strain Ellin6076).